The primary structure comprises 208 residues: Large ribosomal subunit protein bL25 (208 aa).

A compositionally biased stretch (acidic residues) spans Asp-185–Gly-195. Residues Asp-185–Ser-208 form a disordered region. Over residues Glu-196–Ser-208 the composition is skewed to low complexity.

This sequence belongs to the bacterial ribosomal protein bL25 family. CTC subfamily. Part of the 50S ribosomal subunit; part of the 5S rRNA/L5/L18/L25 subcomplex. Contacts the 5S rRNA. Binds to the 5S rRNA independently of L5 and L18.

Functionally, this is one of the proteins that binds to the 5S RNA in the ribosome where it forms part of the central protuberance. This chain is Large ribosomal subunit protein bL25, found in Rhodococcus opacus (strain B4).